Reading from the N-terminus, the 1342-residue chain is DNA-directed RNA polymerase subunit beta (1342 aa).

This sequence belongs to the RNA polymerase beta chain family. In terms of assembly, the RNAP catalytic core consists of 2 alpha, 1 beta, 1 beta' and 1 omega subunit. When a sigma factor is associated with the core the holoenzyme is formed, which can initiate transcription.

It carries out the reaction RNA(n) + a ribonucleoside 5'-triphosphate = RNA(n+1) + diphosphate. Its function is as follows. DNA-dependent RNA polymerase catalyzes the transcription of DNA into RNA using the four ribonucleoside triphosphates as substrates. This is DNA-directed RNA polymerase subunit beta from Klebsiella pneumoniae subsp. pneumoniae (strain ATCC 700721 / MGH 78578).